The following is a 189-amino-acid chain: UPF0301 protein PputGB1_5045 (189 aa).

It belongs to the UPF0301 (AlgH) family.

This is UPF0301 protein PputGB1_5045 from Pseudomonas putida (strain GB-1).